Reading from the N-terminus, the 140-residue chain is Nucleoside diphosphate kinase (140 aa).

K10, F58, R86, T92, R103, and N113 together coordinate ATP. The active-site Pros-phosphohistidine intermediate is the H116.

This sequence belongs to the NDK family. In terms of assembly, homohexamer. Requires Mg(2+) as cofactor.

Its subcellular location is the cytoplasm. The catalysed reaction is a 2'-deoxyribonucleoside 5'-diphosphate + ATP = a 2'-deoxyribonucleoside 5'-triphosphate + ADP. The enzyme catalyses a ribonucleoside 5'-diphosphate + ATP = a ribonucleoside 5'-triphosphate + ADP. Functionally, major role in the synthesis of nucleoside triphosphates other than ATP. The ATP gamma phosphate is transferred to the NDP beta phosphate via a ping-pong mechanism, using a phosphorylated active-site intermediate. The polypeptide is Nucleoside diphosphate kinase (Methanocaldococcus jannaschii (strain ATCC 43067 / DSM 2661 / JAL-1 / JCM 10045 / NBRC 100440) (Methanococcus jannaschii)).